A 292-amino-acid chain; its full sequence is MKQYFNCIGIVGRPRHSTALITHEILYKWLIKKGYQVFIEYNISKKLNLKNPKTATLIEIGRLCDLAIVIGGDGNLLFTARILSYFNIKIIGINCGNLGFLTDLNPDNKFKKLSEVLSGKYFVENRFLLDVMIYKKEQVSKSSIAINEVVLHPKNVAHMIEFEVYINDNFAFSQRSDGLIISTPTGSTGYSLSAGGPIIETSLESILLVPMFPHTLSARPLLIRSDSVIRLRFSDIETDLKISCDSQIVLPVKKKEYVFIRRSNYYLNLIHPKSYNYFETLTSKLNWSKKFF.

The Proton acceptor role is filled by D73. NAD(+) contacts are provided by residues 73 to 74 (DG), 147 to 148 (NE), H158, R175, D177, 188 to 193 (TGYSLS), and Q247.

Belongs to the NAD kinase family. It depends on a divalent metal cation as a cofactor.

It localises to the cytoplasm. The catalysed reaction is NAD(+) + ATP = ADP + NADP(+) + H(+). Its function is as follows. Involved in the regulation of the intracellular balance of NAD and NADP, and is a key enzyme in the biosynthesis of NADP. Catalyzes specifically the phosphorylation on 2'-hydroxyl of the adenosine moiety of NAD to yield NADP. This Buchnera aphidicola subsp. Schizaphis graminum (strain Sg) protein is NAD kinase.